The chain runs to 262 residues: Small ribosomal subunit protein eS4 (262 aa).

An S4 RNA-binding domain is found at 42–105 (LPLIIMLRNR…GEFFRLLYDV (64 aa)).

This sequence belongs to the eukaryotic ribosomal protein eS4 family.

The sequence is that of Small ribosomal subunit protein eS4 (RpS4) from Ixodes scapularis (Black-legged tick).